We begin with the raw amino-acid sequence, 624 residues long: Chitin elicitor receptor kinase 1 (624 aa).

A signal peptide spans 1–18 (MEASTSLLVLVLAAAAFA). The Extracellular segment spans residues 19–240 (AGTVTEAAGD…SPGKGASAGA (222 aa)). Intrachain disulfides connect Cys-30–Cys-93, Cys-34–Cys-160, and Cys-91–Cys-158. A glycan (N-linked (GlcNAc...) asparagine) is linked at Asn-48. 115 to 121 (RGQIYTS) is a binding site for chitin. An N-linked (GlcNAc...) asparagine glycan is attached at Asn-128. 142-148 (PANNIPD) is a binding site for chitin. N-linked (GlcNAc...) asparagine glycans are attached at residues Asn-153 and Asn-157. Residues 173 to 218 (LTYPLRAEDTLASVAATYGLSSQLDVVRRYNPGMESATGSGIVYIP) form the LysM domain. A glycan (N-linked (GlcNAc...) asparagine) is linked at Asn-223. A helical transmembrane segment spans residues 241 to 261 (IAGGVVAGVVVLAAIFLYIIF). Topologically, residues 262 to 624 (YRRRKAKQAT…QGLVNLMSGR (363 aa)) are cytoplasmic. Residues 324-599 (FSIGNKIGQG…RSVVVALMTL (276 aa)) form the Protein kinase domain. ATP-binding positions include 330–338 (IGQGGFGAV) and Lys-351. Asp-443 (proton acceptor) is an active-site residue.

The protein belongs to the protein kinase superfamily. Ser/Thr protein kinase family. In terms of assembly, homooligomer. Interacts with CEBIP. Interacts with LYP4 and LYP6. Interacts with RLCK176. In terms of processing, autophosphorylated; induced by chitin and derivatives. Expressed in seedlings, roots, shoots and stems, and, to a lower extent, in flowers.

Its subcellular location is the cell membrane. The enzyme catalyses L-seryl-[protein] + ATP = O-phospho-L-seryl-[protein] + ADP + H(+). It catalyses the reaction L-threonyl-[protein] + ATP = O-phospho-L-threonyl-[protein] + ADP + H(+). In terms of biological role, lysin motif (LysM) receptor kinase required as a cell surface receptor for chitin elicitor (chitooligosaccharides) signaling leading to innate immunity in response to biotic stresses. Involved in the resistance to pathogenic fungi, probably by sensing microbe-associated molecular patterns (MAMP) and pathogen-associated molecular patterns (PAMP). Involved in the detection of microbial peptidoglycans (PGNs) and mediates PGN response. Plays dual roles in PGN and chitin signaling during innate immunity. Acts as an adapter for LYP4 and LYP6 and mediates signal transduction from the extracellular to intracellular spaces. Participates in the activation of defense genes during response to PGN and chitin. Phosphorylates the downstream partner RLCK185 in response to chitin elicitation. In Oryza sativa subsp. japonica (Rice), this protein is Chitin elicitor receptor kinase 1.